Consider the following 537-residue polypeptide: CTP synthase (537 aa).

The segment at 1–267 is amidoligase domain; sequence MTKYIFVTGG…DQIVCDHLKL (267 aa). S13 is a CTP binding site. Residue S13 participates in UTP binding. Residue 14 to 19 participates in ATP binding; the sequence is SIGKGI. Y54 is an L-glutamine binding site. Position 71 (D71) interacts with ATP. Mg(2+) contacts are provided by D71 and E141. CTP is bound by residues 148 to 150, 188 to 193, and K224; these read DIE and KTKPTQ. UTP contacts are provided by residues 188 to 193 and K224; that span reads KTKPTQ. Residue 240 to 242 participates in ATP binding; sequence RDV. One can recognise a Glutamine amidotransferase type-1 domain in the interval 292–535; sequence RIALVGKYVE…VTAAVKNKNQ (244 aa). Position 354 (G354) interacts with L-glutamine. C381 (nucleophile; for glutamine hydrolysis) is an active-site residue. Residues 382–385, E405, and R463 each bind L-glutamine; that span reads LGMQ. Residues H508 and E510 contribute to the active site.

This sequence belongs to the CTP synthase family. As to quaternary structure, homotetramer.

It carries out the reaction UTP + L-glutamine + ATP + H2O = CTP + L-glutamate + ADP + phosphate + 2 H(+). The catalysed reaction is L-glutamine + H2O = L-glutamate + NH4(+). It catalyses the reaction UTP + NH4(+) + ATP = CTP + ADP + phosphate + 2 H(+). It participates in pyrimidine metabolism; CTP biosynthesis via de novo pathway; CTP from UDP: step 2/2. With respect to regulation, allosterically activated by GTP, when glutamine is the substrate; GTP has no effect on the reaction when ammonia is the substrate. The allosteric effector GTP functions by stabilizing the protein conformation that binds the tetrahedral intermediate(s) formed during glutamine hydrolysis. Inhibited by the product CTP, via allosteric rather than competitive inhibition. Functionally, catalyzes the ATP-dependent amination of UTP to CTP with either L-glutamine or ammonia as the source of nitrogen. Regulates intracellular CTP levels through interactions with the four ribonucleotide triphosphates. The polypeptide is CTP synthase (Streptococcus equi subsp. zooepidemicus (strain H70)).